A 1068-amino-acid chain; its full sequence is Protein AF-10 (1068 aa).

The PHD-type 1 zinc finger occupies 22–74 (IGGCCVCSDERGWAENPLVYCDGHGCSVAVHQACYGIVQVPTGPWFCRKCESQ). The C2HC pre-PHD-type zinc finger occupies 79–112 (RVRCELCPHKDGALKRTDNGGWAHVVCALYIPEV). Residues 80–287 (VRCELCPHKD…SLKRLEDTTA (208 aa)) are self-association. A required for interaction with histone H3 region spans residues 106-190 (ALYIPEVQFA…EGNGADNVQY (85 aa)). The segment at 135–198 (KTCYICDEQG…QYCGYCKYHF (64 aa)) adopts a PHD-type 2 zinc-finger fold. The interaction with FSTL3 stretch occupies residues 141–233 (DEQGRESKAA…QDKHHEKEKK (93 aa)). The disordered stretch occupies residues 206–260 (RGSNRSYDQSLSDSSSHSQDKHHEKEKKKYKEKDKHKQKHKKQPEPSPALVPSLT). A compositionally biased stretch (low complexity) spans 211 to 222 (SYDQSLSDSSSH). Phosphoserine is present on Ser217. The span at 223–240 (SQDKHHEKEKKKYKEKDK) shows a compositional bias: basic and acidic residues. Position 252 is a phosphoserine (Ser252). Lys280 participates in a covalent cross-link: Glycyl lysine isopeptide (Lys-Gly) (interchain with G-Cter in SUMO2). Positions 291–305 (NANFQEVSAHTSSGK) are enriched in polar residues. Residues 291–505 (NANFQEVSAH…SSASPTSSVA (215 aa)) are disordered. Over residues 306-317 (DVSETRGSEGKG) the composition is skewed to basic and acidic residues. Residues 311–674 (RGSEGKGKKS…QDLGDNSRNL (364 aa)) are DNA-binding. Positions 352–372 (SFSGTPGSVKSSSGSSVQSPQ) are enriched in low complexity. Polar residues-rich tracts occupy residues 387–396 (YSHSQQSSAT) and 404–446 (SGSQ…SSLP). A Phosphoserine modification is found at Ser436. Residues 465 to 483 (EKKRKGNKQSKHGPGRPKG) are compositionally biased toward basic residues. Low complexity predominate over residues 490-505 (VSHLSVSSASPTSSVA). Residue Ser532 is modified to Phosphoserine. A compositionally biased stretch (low complexity) spans 583 to 594 (SGSGSSTPVSSS). Disordered stretches follow at residues 583 to 612 (SGSG…ALSP) and 660 to 708 (NNQT…SLEN). Composition is skewed to polar residues over residues 595 to 604 (HLPQQSSGHL) and 660 to 673 (NNQT…NSRN). The segment covering 674–694 (LVGRGSSPRGSLSPRSPVSSL) has biased composition (low complexity). Residues Ser684, Ser686, and Ser689 each carry the phosphoserine modification. Positions 703–784 (NSSLENLPPV…NAQLSVPFPT (82 aa)) are transactivation domain; required for DOT1L-binding. A leucine-zipper region spans residues 750–778 (LQVENRRLEEQIKNLTAKKERLQLLNAQL). The span at 800 to 814 (AQTAPTTDSLNSSKS) shows a compositional bias: polar residues. Positions 800-865 (AQTAPTTDSL…SPAQQGSGVS (66 aa)) are disordered. Composition is skewed to low complexity over residues 834–848 (LTSS…SALS) and 855–865 (QSPAQQGSGVS).

Self-associates. Interacts with FSTL3 isoform 2; the interaction enhances MLLT10 in vitro transcriptional activity and self-association. Interacts with YEATS4. Interacts with SS18. Interacts with DOT1L; this interaction also occurs with the KMT2A/MLL1 fusion protein. Interacts with histone H3; interaction is necessary for MLLT10 binding to nucleosomes; interaction is inhibited by histone H3 'Lys-27' methylations (H3K27me1, H3K27me2 and H3K27me3) amd acetylation; interaction stabilizes association of MLLT10 at chromatin; interaction is essential for histone H3 'Lys-79' dimethylation (H3K79me2). Expressed abundantly in testis.

It is found in the nucleus. Its function is as follows. Probably involved in transcriptional regulation. In vitro or as fusion protein with KMT2A/MLL1 has transactivation activity. Binds to cruciform DNA. In cells, binding to unmodified histone H3 regulates DOT1L functions including histone H3 'Lys-79' dimethylation (H3K79me2) and gene activation. In Homo sapiens (Human), this protein is Protein AF-10.